We begin with the raw amino-acid sequence, 307 residues long: DDRGK domain-containing protein 1 (307 aa).

Topologically, residues 1-2 (MD) are lumenal. The chain crosses the membrane as a helical span at residues 3 to 23 (LILLVGIATALLLILITLYFL). At 24-307 (QSKNAKTETK…TPVAAGESSA (284 aa)) the chain is on the cytoplasmic side. Residues 31–175 (ETKAAAQPQR…EADRLAKEER (145 aa)) form a disordered region. Over residues 52 to 83 (RRAQIARNQRNRLRQNQNAPAVAAAAAPAAAV) the composition is skewed to low complexity. The span at 107–175 (LDEKMGAKKR…EADRLAKEER (69 aa)) shows a compositional bias: basic and acidic residues.

It belongs to the DDRGK1 family. Interacts with Atg9; the interaction is transient.

It localises to the endoplasmic reticulum membrane. In terms of biological role, substrate adapter for ufmylation, the covalent attachment of the ubiquitin-like modifier UFM1 to substrate proteins. Required for ufmylation of Atg9; protects the nervous system during aging, possibly by stabilizing Atg9 and supporting its function. The protein is DDRGK domain-containing protein 1 of Drosophila virilis (Fruit fly).